A 153-amino-acid polypeptide reads, in one-letter code: NAD(P)H-quinone oxidoreductase subunit N (153 aa).

The protein belongs to the complex I NdhN subunit family. In terms of assembly, NDH-1 can be composed of about 15 different subunits; different subcomplexes with different compositions have been identified which probably have different functions.

Its subcellular location is the cellular thylakoid membrane. The enzyme catalyses a plastoquinone + NADH + (n+1) H(+)(in) = a plastoquinol + NAD(+) + n H(+)(out). It carries out the reaction a plastoquinone + NADPH + (n+1) H(+)(in) = a plastoquinol + NADP(+) + n H(+)(out). In terms of biological role, NDH-1 shuttles electrons from an unknown electron donor, via FMN and iron-sulfur (Fe-S) centers, to quinones in the respiratory and/or the photosynthetic chain. The immediate electron acceptor for the enzyme in this species is believed to be plastoquinone. Couples the redox reaction to proton translocation, and thus conserves the redox energy in a proton gradient. Cyanobacterial NDH-1 also plays a role in inorganic carbon-concentration. The sequence is that of NAD(P)H-quinone oxidoreductase subunit N from Prochlorococcus marinus (strain MIT 9313).